The following is a 221-amino-acid chain: Transmembrane protein 225B (221 aa).

A run of 4 transmembrane segments spans residues 14–34 (WAIVPALTSLGYLIILVVSIF), 77–97 (VFLLSAVFLAFVTTFIMMPFA), 109–129 (FVLACISFFTGACAFLALVLH), and 147–167 (VLWPYYVLGFGIFLFIVAGTI).

It is found in the membrane. This Homo sapiens (Human) protein is Transmembrane protein 225B.